The sequence spans 338 residues: MALQRRTTLTKYLIEQQRETNNLPADLRLLIEVVARACKAISYHVSKGALGDALGTAGSENVQGEVQKKLDILSNEILLEANEWGGNLAGMASEEMEQFFPIPANYPKGEYLLVFDPLDGSSNIDVNVSIGTIFSVLRCPDGQQPTEQSFLQPGTQQVAAGYAVYGPQTVLVLTTGNGVNCFTLDRELGSWVLTQSDMRIPVETREYAINASNERHWYPPVEQYIGELKAGKDGPRQSDFNMRWIASMVADVHRILNRGGIFMYPADKRTPDKPGKLRLMYEANPMAFIVEQAGGAATNGEKRILDIQPKSLHERVAVFLGSKNEVDRVTRYHLETKK.

Glu-94, Asp-116, Leu-118, and Asp-119 together coordinate Mg(2+). Residues 119 to 122 (DGSS), Asn-210, and Lys-276 contribute to the substrate site. Glu-282 contacts Mg(2+).

Belongs to the FBPase class 1 family. In terms of assembly, homotetramer. Mg(2+) is required as a cofactor.

The protein resides in the cytoplasm. It carries out the reaction beta-D-fructose 1,6-bisphosphate + H2O = beta-D-fructose 6-phosphate + phosphate. The protein operates within carbohydrate biosynthesis; gluconeogenesis. This is Fructose-1,6-bisphosphatase class 1 from Paraburkholderia phytofirmans (strain DSM 17436 / LMG 22146 / PsJN) (Burkholderia phytofirmans).